The sequence spans 300 residues: Cation-efflux pump FieF (300 aa).

The next 4 helical transmembrane spans lie at 12 to 32 (AAIA…FAWW), 39 to 59 (ILAA…NLLV), 82 to 102 (AALA…LTGI), and 114 to 134 (PGVG…LVSF). The Zn(2+) site is built by D45 and D49. Residues H153 and D157 each contribute to the Zn(2+) site. The next 2 helical transmembrane spans lie at 156 to 176 (SDVM…YGWH) and 178 to 198 (ADAL…LRMG).

This sequence belongs to the cation diffusion facilitator (CDF) transporter (TC 2.A.4) family. FieF subfamily. In terms of assembly, homodimer.

The protein resides in the cell inner membrane. The catalysed reaction is Zn(2+)(in) + H(+)(out) = Zn(2+)(out) + H(+)(in). It catalyses the reaction Cd(2+)(in) + H(+)(out) = Cd(2+)(out) + H(+)(in). The enzyme catalyses Fe(2+)(in) + H(+)(out) = Fe(2+)(out) + H(+)(in). In terms of biological role, divalent metal cation transporter which exports Zn(2+), Cd(2+) and possibly Fe(2+). May be involved in zinc and iron detoxification by efflux. This Escherichia coli O157:H7 (strain EC4115 / EHEC) protein is Cation-efflux pump FieF.